Here is a 622-residue protein sequence, read N- to C-terminus: Low affinity potassium transport system protein Kup (622 aa).

Helical transmembrane passes span 9–29, 49–69, 103–123, 137–157, 165–185, 213–233, 247–267, 276–296, 337–357, 363–383, 396–416, and 419–439; these read LPAI…TSPL, VFGF…IKYL, VIMG…TPAI, PQLD…LFMI, VGQL…GLGL, VSFI…ALYA, WFTV…ALLL, PFFL…AALA, IYIP…IVSF, LAAA…ILST, FVAL…TANL, and LLSG…VMTT.

Belongs to the HAK/KUP transporter (TC 2.A.72) family.

It is found in the cell inner membrane. It catalyses the reaction K(+)(in) + H(+)(in) = K(+)(out) + H(+)(out). Responsible for the low-affinity transport of potassium into the cell. Likely operates as a K(+):H(+) symporter. The polypeptide is Low affinity potassium transport system protein Kup (Escherichia coli O6:K15:H31 (strain 536 / UPEC)).